The sequence spans 597 residues: UvrABC system protein C (597 aa).

The GIY-YIG domain maps to 15–93 (NSPGVYQYFD…IKKHQPRFNV (79 aa)). A UVR domain is found at 207–242 (KDSLQRFRNQMKQHSEKMEFEDAQRIKNKIDVLENY).

Belongs to the UvrC family. As to quaternary structure, interacts with UvrB in an incision complex.

Its subcellular location is the cytoplasm. In terms of biological role, the UvrABC repair system catalyzes the recognition and processing of DNA lesions. UvrC both incises the 5' and 3' sides of the lesion. The N-terminal half is responsible for the 3' incision and the C-terminal half is responsible for the 5' incision. This Christiangramia forsetii (strain DSM 17595 / CGMCC 1.15422 / KT0803) (Gramella forsetii) protein is UvrABC system protein C.